We begin with the raw amino-acid sequence, 348 residues long: Aspartate carbamoyltransferase catalytic subunit (348 aa).

The carbamoyl phosphate site is built by R59 and T60. K87 provides a ligand contact to L-aspartate. Carbamoyl phosphate contacts are provided by R109, H142, and Q145. L-aspartate contacts are provided by R182 and R253. Carbamoyl phosphate is bound by residues G294 and P295.

This sequence belongs to the aspartate/ornithine carbamoyltransferase superfamily. ATCase family. As to quaternary structure, heterododecamer (2C3:3R2) of six catalytic PyrB chains organized as two trimers (C3), and six regulatory PyrI chains organized as three dimers (R2).

It carries out the reaction carbamoyl phosphate + L-aspartate = N-carbamoyl-L-aspartate + phosphate + H(+). The protein operates within pyrimidine metabolism; UMP biosynthesis via de novo pathway; (S)-dihydroorotate from bicarbonate: step 2/3. Its function is as follows. Catalyzes the condensation of carbamoyl phosphate and aspartate to form carbamoyl aspartate and inorganic phosphate, the committed step in the de novo pyrimidine nucleotide biosynthesis pathway. The protein is Aspartate carbamoyltransferase catalytic subunit of Prochlorococcus marinus (strain MIT 9313).